The sequence spans 759 residues: Protein AKNAD1 (759 aa).

The segment at 169-246 (TDQLNPKKDG…HTEKASSGNR (78 aa)) is disordered. The segment covering 181–192 (SNKPGSPTMTEE) has biased composition (polar residues). Positions 371-482 (QKISQGKQMC…EDVKDKVDES (112 aa)) form a coiled coil. Polar residues predominate over residues 484 to 496 (YTSAPSLPVSSPV). Disordered regions lie at residues 484 to 543 (YTSA…QEAP), 634 to 654 (EKAPHSDSTPNSDTGHSFCSD), 678 to 723 (CRKE…PSLA), and 735 to 759 (PDTSKSSPTPGWQEAELGLENMKSQ). Over residues 497-509 (TLDDLASTSSSLS) the composition is skewed to low complexity. Polar residues predominate over residues 639-654 (SDSTPNSDTGHSFCSD). Positions 679–688 (RKEPPKEFHY) are enriched in basic and acidic residues. The segment covering 735–744 (PDTSKSSPTP) has biased composition (polar residues).

It belongs to the AKNA family.

The protein is Protein AKNAD1 (AKNAD1) of Macaca fascicularis (Crab-eating macaque).